Here is a 386-residue protein sequence, read N- to C-terminus: Zinc finger CCCH domain-containing protein 2 (386 aa).

2 consecutive C3H1-type zinc fingers follow at residues 116-143 (HYSGTACPDFRKGGCKRGDACEYAHGVF) and 151-175 (RYRTQPCKDGTACRRRVCFFAHTPD). 2 disordered regions span residues 180–200 (LPAQQSSPRSVASSPLAESYD) and 220–252 (SSPTSTLMSPPKSPPSESPPLSPDGAAAIRRGS). Positions 182-192 (AQQSSPRSVAS) are enriched in polar residues. Positions 220-229 (SSPTSTLMSP) are enriched in low complexity. The segment covering 230 to 241 (PKSPPSESPPLS) has biased composition (pro residues).

Its subcellular location is the nucleus. In terms of biological role, involved in leaf senescence delay. May repress jasmonic acid (JA) signaling role in promoting leaf senescence. May regulate panicle development and pollination/fertilization process. In Oryza sativa subsp. japonica (Rice), this protein is Zinc finger CCCH domain-containing protein 2.